The sequence spans 313 residues: Minor outer capsid protein P9 (313 aa).

The protein belongs to the phytoreovirus minor outer capsid protein P9 family.

The protein resides in the virion. Its subcellular location is the host cytoplasm. In terms of biological role, minor outer capsid protein. This chain is Minor outer capsid protein P9, found in Catharanthus roseus (Madagascar periwinkle).